Consider the following 84-residue polypeptide: Small ribosomal subunit protein uS17 (84 aa).

It belongs to the universal ribosomal protein uS17 family. Part of the 30S ribosomal subunit.

In terms of biological role, one of the primary rRNA binding proteins, it binds specifically to the 5'-end of 16S ribosomal RNA. This chain is Small ribosomal subunit protein uS17, found in Glaesserella parasuis serovar 5 (strain SH0165) (Haemophilus parasuis).